The chain runs to 62 residues: Large ribosomal subunit protein bL28 (62 aa).

This sequence belongs to the bacterial ribosomal protein bL28 family.

The protein is Large ribosomal subunit protein bL28 of Staphylococcus haemolyticus (strain JCSC1435).